The primary structure comprises 198 residues: Pyridoxal 5'-phosphate synthase subunit PdxT (198 aa).

52–54 provides a ligand contact to L-glutamine; the sequence is GES. Cys-84 serves as the catalytic Nucleophile. L-glutamine-binding positions include Arg-116 and 143-144; that span reads IR. Active-site charge relay system residues include His-179 and Glu-181.

This sequence belongs to the glutaminase PdxT/SNO family. In the presence of PdxS, forms a dodecamer of heterodimers. Only shows activity in the heterodimer.

The enzyme catalyses aldehydo-D-ribose 5-phosphate + D-glyceraldehyde 3-phosphate + L-glutamine = pyridoxal 5'-phosphate + L-glutamate + phosphate + 3 H2O + H(+). The catalysed reaction is L-glutamine + H2O = L-glutamate + NH4(+). It functions in the pathway cofactor biosynthesis; pyridoxal 5'-phosphate biosynthesis. In terms of biological role, catalyzes the hydrolysis of glutamine to glutamate and ammonia as part of the biosynthesis of pyridoxal 5'-phosphate. The resulting ammonia molecule is channeled to the active site of PdxS. The sequence is that of Pyridoxal 5'-phosphate synthase subunit PdxT from Caldivirga maquilingensis (strain ATCC 700844 / DSM 13496 / JCM 10307 / IC-167).